Consider the following 585-residue polypeptide: Mitochondrial translation ATP-dependent RNA helicase mrh5 (585 aa).

The Q motif motif lies at 87-117 (PKFHELPLNQNILDGLSTNFAEYKNSTPLQQ). The Helicase ATP-binding domain maps to 121–351 (NALMKSGVSF…SRYITDQLGI (231 aa)). 134 to 141 (GWNGSGKS) is an ATP binding site. The DEAD box motif lies at 261–264 (DESD). In terms of domain architecture, Helicase C-terminal spans 390 to 584 (NLPYEFVRFN…PKSYEFDDEH (195 aa)).

This sequence belongs to the DEAD box helicase family. In terms of assembly, component of the MRH5C complex, composed of mrh5, ppr4, mtf2, and sls1. Proteins mtf2 and sls1 form a subcomplex that serves as a scaffold to bring mrh5 and ppr4 together. The MRH5C complex associates with the small subunit of the mitochondrial ribosome.

The protein resides in the mitochondrion. It catalyses the reaction ATP + H2O = ADP + phosphate + H(+). In terms of biological role, translation activation factor that as part of the MRH5C complex specifically recruits cox1 mRNA to the mitochondrial ribosome for translation initiation. This Schizosaccharomyces pombe (strain 972 / ATCC 24843) (Fission yeast) protein is Mitochondrial translation ATP-dependent RNA helicase mrh5.